A 767-amino-acid polypeptide reads, in one-letter code: Protein ROLLING AND ERECT LEAF 2 (767 aa).

Disordered regions lie at residues 1–20, 78–187, and 201–309; these read MGCT…CKER, PALA…SEFF, and RELE…SSTV. Composition is skewed to pro residues over residues 81–90 and 110–126; these read APTPTPPPPS and APPP…PPPV. A compositionally biased stretch (low complexity) spans 145 to 155; that stretch reads SDSSVASPARS. Basic and acidic residues predominate over residues 201–210; sequence RELEEEEKAR. Acidic residues predominate over residues 221–232; the sequence is EDEVDDDDDERE. Residues 255–264 are compositionally biased toward basic and acidic residues; the sequence is TRSEEGEMGN.

Highly expressed in young leaves and panicles. Expressed at low levels in roots.

The protein localises to the cell membrane. Involved in the regulation of leaf shape formation. May function by coordinating the expression of genes associated with leaf and bulliform cell development. The polypeptide is Protein ROLLING AND ERECT LEAF 2 (Oryza sativa subsp. japonica (Rice)).